A 190-amino-acid chain; its full sequence is Endoribonuclease YbeY (190 aa).

Residues Met-1–Gly-20 form a disordered region. Zn(2+) is bound by residues His-147, His-151, and His-157.

The protein belongs to the endoribonuclease YbeY family. Zn(2+) serves as cofactor.

The protein resides in the cytoplasm. In terms of biological role, single strand-specific metallo-endoribonuclease involved in late-stage 70S ribosome quality control and in maturation of the 3' terminus of the 16S rRNA. The sequence is that of Endoribonuclease YbeY from Nitrobacter hamburgensis (strain DSM 10229 / NCIMB 13809 / X14).